Reading from the N-terminus, the 377-residue chain is Glycine oxidase (377 aa).

FAD is bound by residues 14-15, 34-35, 42-43, 47-49, and valine 180; these read VI, EK, AS, and AGM. Residues arginine 309 and arginine 336 each contribute to the substrate site. 334-340 lines the FAD pocket; it reads HYRNGIL.

The protein belongs to the DAO family. ThiO subfamily. Homotetramer. FAD serves as cofactor.

The catalysed reaction is glycine + O2 + H2O = glyoxylate + H2O2 + NH4(+). It carries out the reaction N-ethylglycine + O2 + H2O = ethylamine + glyoxylate + H2O2. It catalyses the reaction sarcosine + O2 + H2O = methylamine + glyoxylate + H2O2. The enzyme catalyses D-alanine + O2 + H2O = pyruvate + H2O2 + NH4(+). It participates in cofactor biosynthesis; thiamine diphosphate biosynthesis. With respect to regulation, is inhibited at high substrate concentration. In terms of biological role, catalyzes the FAD-dependent oxidative deamination of various amines and D-amino acids to yield the corresponding alpha-keto acids, ammonia/amine, and hydrogen peroxide. Oxidizes glycine, sarcosine (N-methylglycine), N-ethylglycine, D-proline, D-alanine, glycine-ethyl ester, and some other D-amino acids. Does not act on L-proline. Is essential for thiamine biosynthesis since the oxidation of glycine catalyzed by ThiO generates the glycine imine intermediate (dehydroglycine) required for the biosynthesis of the thiazole ring of thiamine pyrophosphate. This is Glycine oxidase from Geobacillus kaustophilus (strain HTA426).